The sequence spans 199 residues: Interleukin-11 (199 aa).

Positions 1–21 are cleaved as a signal peptide; the sequence is MNCVCRLVLVVLSLWPDRVVA. Residues 182-190 are important for interaction with IL11RA and for the stimulation of cell proliferation; sequence HLTLDWAVR.

Belongs to the IL-6 superfamily. In terms of assembly, interacts with either IL11RA1 or IL11RA2 to associate with IL6ST, giving rise to a multimeric signaling complex.

Its subcellular location is the secreted. Cytokine that stimulates the proliferation of hematopoietic stem cells and megakaryocyte progenitor cells and induces megakaryocyte maturation resulting in increased platelet production. Also promotes the proliferation of hepatocytes in response to liver damage. Binding to its receptor formed by IL6ST and either IL11RA1 or IL11RA2 activates a signaling cascade that promotes cell proliferation, also in the context of various cancers. Signaling leads to the activation of intracellular protein kinases and the phosphorylation of STAT3. The interaction with the membrane-bound IL11RA and IL6ST stimulates 'classic signaling', whereas the binding of IL11 and soluble IL11RA to IL6ST stimulates 'trans-signaling'. This chain is Interleukin-11, found in Mus musculus (Mouse).